A 427-amino-acid polypeptide reads, in one-letter code: Acetyl-CoA acetyltransferase, mitochondrial (427 aa).

The N-terminal 33 residues, 1 to 33 (MAVLAALLRSGARSRSPLLRRLVQEIRYVERSY), are a transit peptide targeting the mitochondrion. At Lys-66 the chain carries N6-acetyllysine; alternate. Residue Lys-66 is modified to N6-succinyllysine; alternate. Position 78 is an N6-succinyllysine (Lys-78). Cys-126 functions as the Acyl-thioester intermediate in the catalytic mechanism. 4 positions are modified to N6-acetyllysine; alternate: Lys-174, Lys-181, Lys-190, and Lys-202. Residues Lys-174, Lys-181, Lys-190, and Lys-202 each carry the N6-succinyllysine; alternate modification. Tyr-219 contacts CoA. Tyr-219 lines the K(+) pocket. Lys-223 and Lys-230 each carry N6-acetyllysine; alternate. An N6-succinyllysine; alternate mark is found at Lys-223 and Lys-230. Lys-243 carries the post-translational modification N6-succinyllysine. 2 positions are modified to N6-acetyllysine: Lys-251 and Lys-257. CoA is bound by residues 258 to 260 (RVD) and Lys-263. At Lys-263 the chain carries N6-acetyllysine; alternate. N6-succinyllysine; alternate is present on Lys-263. 2 positions are modified to N6-succinyllysine: Lys-266 and Lys-268. Lys-273 is subject to N6-acetyllysine. The K(+) site is built by Ala-280, Ala-281, and Ala-283. Ser-284 serves as a coordination point for CoA. The residue at position 338 (Lys-338) is an N6-acetyllysine. Val-381 serves as a coordination point for K(+). Catalysis depends on Cys-413, which acts as the Proton donor/acceptor.

It belongs to the thiolase-like superfamily. Thiolase family. In terms of assembly, homotetramer. In terms of processing, succinylation at Lys-268, adjacent to a coenzyme A binding site. Desuccinylated by SIRT5.

The protein resides in the mitochondrion. The catalysed reaction is 2 acetyl-CoA = acetoacetyl-CoA + CoA. It catalyses the reaction propanoyl-CoA + acetyl-CoA = 2-methyl-3-oxobutanoyl-CoA + CoA. The protein operates within lipid metabolism; fatty acid beta-oxidation. With respect to regulation, activated by potassium ions, but not sodium ions. Its function is as follows. This is one of the enzymes that catalyzes the last step of the mitochondrial beta-oxidation pathway, an aerobic process breaking down fatty acids into acetyl-CoA. Using free coenzyme A/CoA, catalyzes the thiolytic cleavage of medium- to long-chain 3-oxoacyl-CoAs into acetyl-CoA and a fatty acyl-CoA shortened by two carbon atoms. The activity of the enzyme is reversible and it can also catalyze the condensation of two acetyl-CoA molecules into acetoacetyl-CoA. Thereby, it plays a major role in ketone body metabolism. In Homo sapiens (Human), this protein is Acetyl-CoA acetyltransferase, mitochondrial (ACAT1).